A 163-amino-acid chain; its full sequence is PTS system fructose-specific EIIB component (163 aa).

In terms of domain architecture, PTS EIIB type-4 spans 1 to 163 (MMNIVLARID…FVQILRNVTK (163 aa)). Residue histidine 15 is the Pros-phosphohistidine intermediate of the active site. Position 15 is a phosphohistidine; by EIIA (histidine 15).

It localises to the cytoplasm. It carries out the reaction D-fructose(out) + N(pros)-phospho-L-histidyl-[protein] = D-fructose 1-phosphate(in) + L-histidyl-[protein]. Functionally, the phosphoenolpyruvate-dependent sugar phosphotransferase system (sugar PTS), a major carbohydrate active -transport system, catalyzes the phosphorylation of incoming sugar substrates concomitantly with their translocation across the cell membrane. The enzyme II LevDE PTS system is involved in fructose transport. Its function is as follows. LevD and LevE act as negative regulators of the levanase operon. They may be involved in a PTS-mediated phosphorylation of a regulator. In Bacillus subtilis (strain 168), this protein is PTS system fructose-specific EIIB component.